The primary structure comprises 257 residues: Protein THYLAKOID ASSEMBLY 8-like, chloroplastic (257 aa).

A chloroplast-targeting transit peptide spans 1-55 (MTAIRVCSRKFPTFASIFFQNITRNPSIHRISFSNLKPKTLLHPIPPKPFTVFVS). PPR repeat units follow at residues 142-176 (DVFM…NLFP) and 177-211 (DSQT…PDPP).

Belongs to the PPR family. P subfamily.

The protein resides in the plastid. Its subcellular location is the chloroplast. Functionally, binds weakly to specific single strand RNA (ssRNA). This chain is Protein THYLAKOID ASSEMBLY 8-like, chloroplastic, found in Arabidopsis thaliana (Mouse-ear cress).